The following is a 107-amino-acid chain: Ferredoxin 1 (107 aa).

4Fe-4S ferredoxin-type domains are found at residues 2-30 (TFVV…YEGP) and 31-60 (NFLV…SEDE). Residues Cys9 and Cys17 each coordinate [3Fe-4S] cluster. [4Fe-4S] cluster is bound by residues Cys21, Cys40, Cys43, and Cys46. Cys50 is a [3Fe-4S] cluster binding site.

[4Fe-4S] cluster is required as a cofactor. It depends on [3Fe-4S] cluster as a cofactor.

In terms of biological role, ferredoxins are iron-sulfur proteins that transfer electrons in a wide variety of metabolic reactions. The polypeptide is Ferredoxin 1 (fdxA) (Pseudomonas aeruginosa (strain ATCC 15692 / DSM 22644 / CIP 104116 / JCM 14847 / LMG 12228 / 1C / PRS 101 / PAO1)).